We begin with the raw amino-acid sequence, 118 residues long: Autophagy-related protein 8D (118 aa).

Gly-118 carries the Phosphatidylethanolamine amidated glycine lipid modification.

This sequence belongs to the ATG8 family. In terms of assembly, interacts with ATG4. The C-terminal Gly is amidated with phosphatidylethanolamine by an activating system similar to that for ubiquitin.

It is found in the cytoplasmic vesicle. The protein resides in the autophagosome membrane. Its subcellular location is the vacuole membrane. It localises to the cytoplasm. The protein localises to the cytoskeleton. Ubiquitin-like modifier involved in autophagosomes formation. May mediate the delivery of the autophagosomes to the vacuole via the microtubule cytoskeleton. This is Autophagy-related protein 8D (ATG8D) from Oryza sativa subsp. japonica (Rice).